A 487-amino-acid chain; its full sequence is rRNA N(6)-adenosine-methyltransferase ZCCHC4 (487 aa).

Zn(2+) contacts are provided by Cys-28, His-30, Cys-52, Cys-61, Cys-113, Cys-116, His-128, and His-131. The segment at 28–70 adopts a GRF-type zinc-finger fold; sequence CPHGPTLLFVKVSQGKEQGRRFYACSACRDRKDCHFFQWEDDK. S-adenosyl-L-methionine-binding positions include 160 to 163, Arg-190, Asp-213, 231 to 232, and Asp-264; these read QYLF and NM. The regulatory loop stretch occupies residues 323–343; that stretch reads QVDYDNHALYKHGKTGRKQSP. Positions 366, 369, 379, 380, 383, 386, 396, 397, 400, 403, 410, 411, 414, 417, 422, and 424 each coordinate Zn(2+). Positions 381–431 constitute a DHHC domain; that stretch reads NICNCCTSKDGRPWKHCTQCNKCVKPSWTHCSACNHCALPDHPCGTAGRGC. Residues 429–446 form a CCHC-type zinc finger; that stretch reads RGCFLCGGKDHKRRGCPH. Positions 445-487 are disordered; that stretch reads PHQSVSAHGKRMENLKQKNIKGSMKKQPIAATSKKRKRKRNNP. Over residues 477–487 the composition is skewed to basic residues; sequence SKKRKRKRNNP.

The protein belongs to the ZCCHC4 family.

Its subcellular location is the cytoplasm. It localises to the nucleus. The protein localises to the nucleolus. It carries out the reaction adenosine(4220) in 28S rRNA + S-adenosyl-L-methionine = N(6)-methyladenosine(4220) in 28S rRNA + S-adenosyl-L-homocysteine + H(+). Its function is as follows. rRNA N6-methyltransferase that specifically methylates the adenine in position 4220 of 28S rRNA. N6-methylation of adenine(4220) in 28S rRNA is required for translation. In Xenopus tropicalis (Western clawed frog), this protein is rRNA N(6)-adenosine-methyltransferase ZCCHC4 (zcchc4).